Here is an 81-residue protein sequence, read N- to C-terminus: ATP synthase subunit c, chloroplastic (81 aa).

A run of 2 helical transmembrane segments spans residues 3–23 (PLIS…ASIG) and 57–77 (LAFM…LLFA).

This sequence belongs to the ATPase C chain family. As to quaternary structure, F-type ATPases have 2 components, F(1) - the catalytic core - and F(0) - the membrane proton channel. F(1) has five subunits: alpha(3), beta(3), gamma(1), delta(1), epsilon(1). F(0) has four main subunits: a(1), b(1), b'(1) and c(10-14). The alpha and beta chains form an alternating ring which encloses part of the gamma chain. F(1) is attached to F(0) by a central stalk formed by the gamma and epsilon chains, while a peripheral stalk is formed by the delta, b and b' chains.

The protein resides in the plastid. Its subcellular location is the chloroplast thylakoid membrane. Functionally, f(1)F(0) ATP synthase produces ATP from ADP in the presence of a proton or sodium gradient. F-type ATPases consist of two structural domains, F(1) containing the extramembraneous catalytic core and F(0) containing the membrane proton channel, linked together by a central stalk and a peripheral stalk. During catalysis, ATP synthesis in the catalytic domain of F(1) is coupled via a rotary mechanism of the central stalk subunits to proton translocation. Its function is as follows. Key component of the F(0) channel; it plays a direct role in translocation across the membrane. A homomeric c-ring of between 10-14 subunits forms the central stalk rotor element with the F(1) delta and epsilon subunits. This Gossypium barbadense (Sea Island cotton) protein is ATP synthase subunit c, chloroplastic.